Reading from the N-terminus, the 67-residue chain is Large ribosomal subunit protein bL35 (67 aa).

The segment covering 1–16 (MPKMKTKSSAKKRFRV) has biased composition (basic residues). The segment at 1 to 24 (MPKMKTKSSAKKRFRVRPGGTVKR) is disordered.

Belongs to the bacterial ribosomal protein bL35 family.

The protein is Large ribosomal subunit protein bL35 of Verminephrobacter eiseniae (strain EF01-2).